Reading from the N-terminus, the 573-residue chain is Sulfite reductase [NADPH] hemoprotein beta-component (573 aa).

Positions 438, 444, 483, and 487 each coordinate [4Fe-4S] cluster. Cys-487 is a binding site for siroheme.

This sequence belongs to the nitrite and sulfite reductase 4Fe-4S domain family. As to quaternary structure, alpha(8)-beta(8). The alpha component is a flavoprotein, the beta component is a hemoprotein. Siroheme is required as a cofactor. It depends on [4Fe-4S] cluster as a cofactor.

The catalysed reaction is hydrogen sulfide + 3 NADP(+) + 3 H2O = sulfite + 3 NADPH + 4 H(+). It functions in the pathway sulfur metabolism; hydrogen sulfide biosynthesis; hydrogen sulfide from sulfite (NADPH route): step 1/1. Component of the sulfite reductase complex that catalyzes the 6-electron reduction of sulfite to sulfide. This is one of several activities required for the biosynthesis of L-cysteine from sulfate. The polypeptide is Sulfite reductase [NADPH] hemoprotein beta-component (Geobacillus thermodenitrificans (strain NG80-2)).